A 287-amino-acid chain; its full sequence is ATP synthase gamma chain (287 aa).

This sequence belongs to the ATPase gamma chain family. In terms of assembly, F-type ATPases have 2 components, CF(1) - the catalytic core - and CF(0) - the membrane proton channel. CF(1) has five subunits: alpha(3), beta(3), gamma(1), delta(1), epsilon(1). CF(0) has three main subunits: a, b and c.

Its subcellular location is the cell inner membrane. Produces ATP from ADP in the presence of a proton gradient across the membrane. The gamma chain is believed to be important in regulating ATPase activity and the flow of protons through the CF(0) complex. This Xanthomonas oryzae pv. oryzae (strain MAFF 311018) protein is ATP synthase gamma chain.